A 91-amino-acid chain; its full sequence is Large ribosomal subunit protein bL27 (91 aa).

The disordered stretch occupies residues 1–20; it reads MAHKKGVGSSKNGRDSNPKY.

The protein belongs to the bacterial ribosomal protein bL27 family.

The sequence is that of Large ribosomal subunit protein bL27 from Deinococcus geothermalis (strain DSM 11300 / CIP 105573 / AG-3a).